Here is a 170-residue protein sequence, read N- to C-terminus: Large ribosomal subunit protein uL10 (170 aa).

Belongs to the universal ribosomal protein uL10 family. In terms of assembly, part of the ribosomal stalk of the 50S ribosomal subunit. The N-terminus interacts with L11 and the large rRNA to form the base of the stalk. The C-terminus forms an elongated spine to which L12 dimers bind in a sequential fashion forming a multimeric L10(L12)X complex.

Functionally, forms part of the ribosomal stalk, playing a central role in the interaction of the ribosome with GTP-bound translation factors. This Fusobacterium nucleatum subsp. nucleatum (strain ATCC 25586 / DSM 15643 / BCRC 10681 / CIP 101130 / JCM 8532 / KCTC 2640 / LMG 13131 / VPI 4355) protein is Large ribosomal subunit protein uL10.